The sequence spans 148 residues: FAD synthase (148 aa).

ATP is bound by residues 5–6 (TF), 10–13 (HPGH), Asp92, and Tyr119.

This sequence belongs to the archaeal FAD synthase family. In terms of assembly, homodimer. It depends on a divalent metal cation as a cofactor.

The catalysed reaction is FMN + ATP + H(+) = FAD + diphosphate. It participates in cofactor biosynthesis; FAD biosynthesis; FAD from FMN: step 1/1. Its function is as follows. Catalyzes the transfer of the AMP portion of ATP to flavin mononucleotide (FMN) to produce flavin adenine dinucleotide (FAD) coenzyme. The sequence is that of FAD synthase from Methanosphaera stadtmanae (strain ATCC 43021 / DSM 3091 / JCM 11832 / MCB-3).